Consider the following 156-residue polypeptide: RING finger protein 224 (156 aa).

The RING-type zinc-finger motif lies at 24–71; the sequence is CIICCSAYDLSGHLPRRLYCGHTFCQACVRRLDTPAPEQRWIPCPQCR.

This is RING finger protein 224 (RNF224) from Homo sapiens (Human).